A 407-amino-acid chain; its full sequence is Carbamoyl phosphate synthase small chain (407 aa).

The tract at residues methionine 1–glutamate 203 is CPSase. Positions 61, 255, and 257 each coordinate L-glutamine. Residues threonine 207–glutamate 405 enclose the Glutamine amidotransferase type-1 domain. Cysteine 283 (nucleophile) is an active-site residue. L-glutamine-binding residues include phenylalanine 284, glutamine 287, asparagine 325, glycine 327, and phenylalanine 328. Residues histidine 378 and glutamate 380 contribute to the active site.

Belongs to the CarA family. As to quaternary structure, composed of two chains; the small (or glutamine) chain promotes the hydrolysis of glutamine to ammonia, which is used by the large (or ammonia) chain to synthesize carbamoyl phosphate. Tetramer of heterodimers (alpha,beta)4.

It catalyses the reaction hydrogencarbonate + L-glutamine + 2 ATP + H2O = carbamoyl phosphate + L-glutamate + 2 ADP + phosphate + 2 H(+). The enzyme catalyses L-glutamine + H2O = L-glutamate + NH4(+). Its pathway is amino-acid biosynthesis; L-arginine biosynthesis; carbamoyl phosphate from bicarbonate: step 1/1. It participates in pyrimidine metabolism; UMP biosynthesis via de novo pathway; (S)-dihydroorotate from bicarbonate: step 1/3. In terms of biological role, small subunit of the glutamine-dependent carbamoyl phosphate synthetase (CPSase). CPSase catalyzes the formation of carbamoyl phosphate from the ammonia moiety of glutamine, carbonate, and phosphate donated by ATP, constituting the first step of 2 biosynthetic pathways, one leading to arginine and/or urea and the other to pyrimidine nucleotides. The small subunit (glutamine amidotransferase) binds and cleaves glutamine to supply the large subunit with the substrate ammonia. This Bifidobacterium longum (strain DJO10A) protein is Carbamoyl phosphate synthase small chain.